The sequence spans 247 residues: Triosephosphate isomerase (247 aa).

Residue 9 to 11 (NWK) coordinates substrate. Histidine 94 acts as the Electrophile in catalysis. Glutamate 166 serves as the catalytic Proton acceptor. Substrate is bound by residues glycine 172, serine 211, and 232–233 (GG).

The protein belongs to the triosephosphate isomerase family. Homodimer.

It localises to the cytoplasm. It catalyses the reaction D-glyceraldehyde 3-phosphate = dihydroxyacetone phosphate. It participates in carbohydrate biosynthesis; gluconeogenesis. It functions in the pathway carbohydrate degradation; glycolysis; D-glyceraldehyde 3-phosphate from glycerone phosphate: step 1/1. Involved in the gluconeogenesis. Catalyzes stereospecifically the conversion of dihydroxyacetone phosphate (DHAP) to D-glyceraldehyde-3-phosphate (G3P). This chain is Triosephosphate isomerase, found in Cupriavidus taiwanensis (strain DSM 17343 / BCRC 17206 / CCUG 44338 / CIP 107171 / LMG 19424 / R1) (Ralstonia taiwanensis (strain LMG 19424)).